Consider the following 160-residue polypeptide: Ribonuclease P protein component 2 (160 aa).

It belongs to the eukaryotic/archaeal RNase P protein component 2 family. As to quaternary structure, consists of a catalytic RNA component and at least 4-5 protein subunits.

It localises to the cytoplasm. It catalyses the reaction Endonucleolytic cleavage of RNA, removing 5'-extranucleotides from tRNA precursor.. In terms of biological role, part of ribonuclease P, a protein complex that generates mature tRNA molecules by cleaving their 5'-ends. The chain is Ribonuclease P protein component 2 from Methanosphaerula palustris (strain ATCC BAA-1556 / DSM 19958 / E1-9c).